We begin with the raw amino-acid sequence, 450 residues long: 3-phosphoshikimate 1-carboxyvinyltransferase (450 aa).

3 residues coordinate 3-phosphoshikimate: Lys28, Ser29, and Arg33. Lys28 is a phosphoenolpyruvate binding site. The phosphoenolpyruvate site is built by Gly100 and Arg128. Residues Ser173, Gln175, Asp326, and Lys353 each contribute to the 3-phosphoshikimate site. Gln175 is a binding site for phosphoenolpyruvate. Asp326 acts as the Proton acceptor in catalysis. 2 residues coordinate phosphoenolpyruvate: Arg357 and Arg402.

The protein belongs to the EPSP synthase family. Monomer.

It localises to the cytoplasm. It catalyses the reaction 3-phosphoshikimate + phosphoenolpyruvate = 5-O-(1-carboxyvinyl)-3-phosphoshikimate + phosphate. The protein operates within metabolic intermediate biosynthesis; chorismate biosynthesis; chorismate from D-erythrose 4-phosphate and phosphoenolpyruvate: step 6/7. In terms of biological role, catalyzes the transfer of the enolpyruvyl moiety of phosphoenolpyruvate (PEP) to the 5-hydroxyl of shikimate-3-phosphate (S3P) to produce enolpyruvyl shikimate-3-phosphate and inorganic phosphate. The polypeptide is 3-phosphoshikimate 1-carboxyvinyltransferase (Brucella melitensis biotype 1 (strain ATCC 23456 / CCUG 17765 / NCTC 10094 / 16M)).